The primary structure comprises 219 residues: Thiopurine S-methyltransferase (219 aa).

Positions 10, 45, 66, and 123 each coordinate S-adenosyl-L-methionine.

The protein belongs to the class I-like SAM-binding methyltransferase superfamily. TPMT family.

It is found in the cytoplasm. It carries out the reaction S-adenosyl-L-methionine + a thiopurine = S-adenosyl-L-homocysteine + a thiopurine S-methylether.. This chain is Thiopurine S-methyltransferase, found in Marinobacter nauticus (strain ATCC 700491 / DSM 11845 / VT8) (Marinobacter aquaeolei).